Consider the following 550-residue polypeptide: Sorting nexin-33 (550 aa).

The 61-residue stretch at 1-61 (MALKARALYS…PASYVEIQSS (61 aa)) folds into the SH3 domain. Positions 62-152 (RSGSVQVDYS…QDSIASGKRG (91 aa)) are disordered. Acidic residues predominate over residues 86–102 (YDDDDEEDDDDWDDWDD). The segment covering 128–144 (SRPEYSHRPRPALERQD) has biased composition (basic and acidic residues). A PX domain is found at 206 to 316 (FNCSVEEPTK…HFLGCQDEKQ (111 aa)). In terms of domain architecture, BAR spans 347–550 (LQDVEERVDV…EKTLHLYDEL (204 aa)).

This sequence belongs to the sorting nexin family.

The protein resides in the cytoplasm. The protein localises to the cytosol. Its subcellular location is the membrane. It localises to the cytoplasmic vesicle membrane. Its function is as follows. Plays a role in the reorganization of the cytoskeleton, endocytosis and cellular vesicle trafficking, both during interphase and at the end of mitotic cell divisions. Required for efficient progress through mitosis and cytokinesis. Required for normal formation of the cleavage furrow at the end of mitosis. Modulates endocytosis of cell-surface proteins. Promotes membrane tubulation (in vitro). May promote the formation of macropinosomes. This chain is Sorting nexin-33 (snx33), found in Xenopus laevis (African clawed frog).